The sequence spans 261 residues: tRNA pseudouridine synthase A (261 aa).

Aspartate 55 (nucleophile) is an active-site residue. Residue tyrosine 114 participates in substrate binding.

Belongs to the tRNA pseudouridine synthase TruA family. Homodimer.

It catalyses the reaction uridine(38/39/40) in tRNA = pseudouridine(38/39/40) in tRNA. Functionally, formation of pseudouridine at positions 38, 39 and 40 in the anticodon stem and loop of transfer RNAs. The chain is tRNA pseudouridine synthase A from Paracoccus denitrificans (strain Pd 1222).